We begin with the raw amino-acid sequence, 736 residues long: Serine/threonine-protein kinase BRSK2 (736 aa).

The Protein kinase domain maps to 19-270 (YRLEKTLGKG…LEHIQKHIWY (252 aa)). Residues 25-33 (LGKGQTGLV) and Lys-48 each bind ATP. The active-site Proton acceptor is the Asp-141. Thr-174 is subject to Phosphothreonine; by LKB1. Residue Thr-260 is modified to Phosphothreonine; by PKA. Ser-294 is modified (phosphoserine). A UBA domain is found at 297–339 (DIDPDVLDSMHSLGCFRDRNKLLQDLLSEEENQEKMIYFLLLD). Residues 345–366 (PSQEDEDLPPRNEIDPPRKRVD) show a composition bias toward basic and acidic residues. Disordered stretches follow at residues 345–475 (PSQE…GVPW) and 493–513 (HRRKLQVPTPEEMSNLTPESS). Ser-367, Ser-382, Ser-393, Ser-412, Ala-416, Ser-423, and Ser-427 each carry phosphoserine. Over residues 410-428 (SRSISGASSGLSTSPLSSP) the composition is skewed to low complexity. Pro residues predominate over residues 431–445 (TPHPSPRGSPLPTPK). Ser-455 is modified (phosphoserine). 3 positions are modified to phosphothreonine: Thr-459, Thr-463, and Thr-509. 3 positions are modified to phosphoserine: Ser-512, Ser-513, and Ser-520. A KEN box motif is present at residues 603-605 (KEN). A disordered region spans residues 681–736 (KNGQAAQAPSTPAKRSAHGPLGDSAAAGPGPGGDAEYPTGKDTAKMGPPTARREQP). Residues 699–708 (GPLGDSAAAG) show a composition bias toward low complexity.

The protein belongs to the protein kinase superfamily. CAMK Ser/Thr protein kinase family. SNF1 subfamily. In terms of assembly, interacts with FZR1, a regulatory subunit of the APC ubiquitin ligase complex. Interacts with COPS5. Interacts with PAK1. Requires Mg(2+) as cofactor. In terms of processing, phosphorylated at Thr-174 by STK11/LKB1 in complex with STE20-related adapter-alpha (STRADA) pseudo kinase and CAB39. Not phosphorylated at Thr-174 by CaMKK2. In contrast, it is phosphorylated and activated by CaMKK1. May be inactivated via dephosphorylation of Thr-174 by PP2C. Phosphorylated at Thr-260 by PKA. Phosphorylation at Thr-260 by PKA was not observed in another study, but this may reflect differences in the experimental approach. Phosphorylation at Thr-260 seems to play a role in the regulation of insulin secretion. Polyubiquitinated by the APC complex in conjunction with FZR1, leading to its proteasomal degradation. Targeted for proteasomal degradation by interaction with COPS5. BRSK2 levels change during the cell cycle. BRSK2 levels are low at the G1/S boundary and gradually increase as cells progress into G2 phase. BRSK2 levels decrease rapidly at the end of mitosis. Detected in pancreas islets (at protein level).

The protein localises to the cytoplasm. It is found in the cytoskeleton. It localises to the microtubule organizing center. Its subcellular location is the centrosome. The protein resides in the perinuclear region. The protein localises to the endoplasmic reticulum. The enzyme catalyses L-seryl-[protein] + ATP = O-phospho-L-seryl-[protein] + ADP + H(+). It catalyses the reaction L-threonyl-[protein] + ATP = O-phospho-L-threonyl-[protein] + ADP + H(+). It carries out the reaction L-seryl-[tau protein] + ATP = O-phospho-L-seryl-[tau protein] + ADP + H(+). The catalysed reaction is L-threonyl-[tau protein] + ATP = O-phospho-L-threonyl-[tau protein] + ADP + H(+). Activated by phosphorylation on Thr-174 by STK11/LKB1. Serine/threonine-protein kinase that plays a key role in polarization of neurons and axonogenesis, cell cycle progress and insulin secretion. Phosphorylates CDK16, CDC25C, MAPT/TAU, PAK1 and WEE1. Following phosphorylation and activation by STK11/LKB1, acts as a key regulator of polarization of cortical neurons, probably by mediating phosphorylation of microtubule-associated proteins such as MAPT/TAU at 'Thr-529' and 'Ser-579'. Also regulates neuron polarization by mediating phosphorylation of WEE1 at 'Ser-642' in postmitotic neurons, leading to down-regulate WEE1 activity in polarized neurons. Plays a role in the regulation of the mitotic cell cycle progress and the onset of mitosis. Plays a role in the regulation of insulin secretion in response to elevated glucose levels, probably via phosphorylation of CDK16 and PAK1. While BRSK2 phosphorylated at Thr-174 can inhibit insulin secretion, BRSK2 phosphorylated at Thr-260 can promote insulin secretion. Regulates reorganization of the actin cytoskeleton. May play a role in the apoptotic response triggered by endoplasmic reticulum (ER) stress. The protein is Serine/threonine-protein kinase BRSK2 (BRSK2) of Homo sapiens (Human).